A 191-amino-acid polypeptide reads, in one-letter code: D-glycero-beta-D-manno-heptose-1,7-bisphosphate 7-phosphatase (191 aa).

Catalysis depends on Asp11, which acts as the Nucleophile. 2 residues coordinate Mg(2+): Asp11 and Asp13. Substrate is bound by residues Asp11–Asp13, Asp19–Tyr22, and Thr53–Ser56. The active-site Proton donor is Asp13. Cys92, His94, Cys107, and Cys109 together coordinate Zn(2+). Residue Arg110 to Lys111 coordinates substrate. Mg(2+) is bound by residues Asp136 and Lys137. Lys137 serves as a coordination point for substrate.

This sequence belongs to the GmhB family. As to quaternary structure, monomer. Requires Mg(2+) as cofactor. Zn(2+) is required as a cofactor.

The protein resides in the cytoplasm. The catalysed reaction is D-glycero-beta-D-manno-heptose 1,7-bisphosphate + H2O = D-glycero-beta-D-manno-heptose 1-phosphate + phosphate. It participates in nucleotide-sugar biosynthesis; ADP-L-glycero-beta-D-manno-heptose biosynthesis; ADP-L-glycero-beta-D-manno-heptose from D-glycero-beta-D-manno-heptose 7-phosphate: step 2/4. The protein operates within bacterial outer membrane biogenesis; LPS core biosynthesis. Converts the D-glycero-beta-D-manno-heptose 1,7-bisphosphate intermediate into D-glycero-beta-D-manno-heptose 1-phosphate by removing the phosphate group at the C-7 position. This chain is D-glycero-beta-D-manno-heptose-1,7-bisphosphate 7-phosphatase (gmhB), found in Escherichia coli O157:H7.